The sequence spans 491 residues: NADH-ubiquinone oxidoreductase chain 2 (491 aa).

14 helical membrane passes run 11-31, 38-58, 74-94, 106-126, 129-149, 161-181, 210-230, 238-258, 270-290, 298-318, 330-350, 375-395, 411-433, and 463-483; these read MIKY…SISI, VHII…VIGI, ELIK…IKMF, ITDE…ISME, NLIT…ILAL, LKYY…IVSI, IALI…HGWL, GMLM…MVLI, AIMF…VGTI, LIRF…LMLA, VYYL…IMGF, GAIV…MTNF, VYLT…NLVK, and IVLG…ILNV.

Belongs to the complex I subunit 2 family.

It is found in the mitochondrion inner membrane. The enzyme catalyses a ubiquinone + NADH + 5 H(+)(in) = a ubiquinol + NAD(+) + 4 H(+)(out). Its function is as follows. Core subunit of the mitochondrial membrane respiratory chain NADH dehydrogenase (Complex I) that is believed to belong to the minimal assembly required for catalysis. Complex I functions in the transfer of electrons from NADH to the respiratory chain. The immediate electron acceptor for the enzyme is believed to be ubiquinone. The polypeptide is NADH-ubiquinone oxidoreductase chain 2 (nad2) (Dictyostelium citrinum (Slime mold)).